We begin with the raw amino-acid sequence, 133 residues long: ATP synthase epsilon chain (133 aa).

Belongs to the ATPase epsilon chain family. In terms of assembly, F-type ATPases have 2 components, CF(1) - the catalytic core - and CF(0) - the membrane proton channel. CF(1) has five subunits: alpha(3), beta(3), gamma(1), delta(1), epsilon(1). CF(0) has three main subunits: a, b and c.

Its subcellular location is the cell membrane. Functionally, produces ATP from ADP in the presence of a proton gradient across the membrane. The sequence is that of ATP synthase epsilon chain from Bacillus anthracis (strain A0248).